The primary structure comprises 169 residues: Transcription antitermination protein NusB (169 aa).

A disordered region spans residues 1-23; the sequence is MADSKKPAIKKPVPKGDRKANRR.

Belongs to the NusB family.

Involved in transcription antitermination. Required for transcription of ribosomal RNA (rRNA) genes. Binds specifically to the boxA antiterminator sequence of the ribosomal RNA (rrn) operons. The protein is Transcription antitermination protein NusB of Rhodopseudomonas palustris (strain HaA2).